Reading from the N-terminus, the 65-residue chain is MPKMKTRQSAAKRYEVTGSGKLRRRRAGKNHLLQHKSAARKRSLSTKVEVSETDLYKVTRQCPYL.

The disordered stretch occupies residues 1 to 46 (MPKMKTRQSAAKRYEVTGSGKLRRRRAGKNHLLQHKSAARKRSLST). Residues 21 to 44 (KLRRRRAGKNHLLQHKSAARKRSL) are compositionally biased toward basic residues.

This sequence belongs to the bacterial ribosomal protein bL35 family.

In Gloeobacter violaceus (strain ATCC 29082 / PCC 7421), this protein is Large ribosomal subunit protein bL35.